Consider the following 706-residue polypeptide: MATKDLFAQPEPSRQPASPAERMAALRAELHAHAHRYYVLDEPTIPDSEYDRLFKELQDLEAAYPELLTPDSPTQRVGGKPLDQFASVRHKVPMLSIRTETDTEATGAQNFDTRVRKELGLTESNPPVEYVAELKFDGLAMSLRYEHGVLVQAATRGDGEVGEEVTQNIRTIRQIPLKLPSDAPPVLEVRGEVYMRRADFEALNDKQREKIAAGAKGEKTFVNPRNAAAGAVRQLDPAIAAQRPLSFFAYGVGEVVLEAEQANPKNPWVATHMELLQALKSWGFPVAAQTKIAHGASELIAFHQAMGQQRDSLPYDIDGVVYKVNSLALQKQMGFVSREPRWAVAHKYPAQEQLTTVLGIEVQVGRTGKLTPVAKLAPVFVGGVTVTNATLHNEDEARRKDVRVGDTVIVRRAGDVIPEVVSVLPDKRLPGAPMFTMPRQCPVCGSDAVREEGEADYRCTGGLFCGAQRKEAILHYAHRRAVEIEGLGDKLVEQLVDANVIRTLPDLYKLGLTALASLDRMAEKSANNLLKALEKSKQTTLPRFLFGLGIRHVGEATAKELARHFGNLDAIMDATQEQLLAVSDVGSIVAQSIRTFFDQPHNREVVEQLRACGVHWEEGEPAAVAPKPLSGKTFVITGTLPTLSRDEAKDKVEAAGGKVAGSVSKKTDYVVAGTEAGSKLVKAQELGIAVIDEAALMRLLASAEAE.

Residues 47–51 (DSEYD), 96–97 (SI), and glutamate 133 contribute to the NAD(+) site. Lysine 135 functions as the N6-AMP-lysine intermediate in the catalytic mechanism. The NAD(+) site is built by arginine 156, glutamate 192, lysine 323, and lysine 347. The Zn(2+) site is built by cysteine 441, cysteine 444, cysteine 459, and cysteine 465. The BRCT domain occupies 624–706 (VAPKPLSGKT…MRLLASAEAE (83 aa)).

Belongs to the NAD-dependent DNA ligase family. LigA subfamily. The cofactor is Mg(2+). Requires Mn(2+) as cofactor.

The enzyme catalyses NAD(+) + (deoxyribonucleotide)n-3'-hydroxyl + 5'-phospho-(deoxyribonucleotide)m = (deoxyribonucleotide)n+m + AMP + beta-nicotinamide D-nucleotide.. Its function is as follows. DNA ligase that catalyzes the formation of phosphodiester linkages between 5'-phosphoryl and 3'-hydroxyl groups in double-stranded DNA using NAD as a coenzyme and as the energy source for the reaction. It is essential for DNA replication and repair of damaged DNA. The polypeptide is DNA ligase (Polaromonas sp. (strain JS666 / ATCC BAA-500)).